A 332-amino-acid polypeptide reads, in one-letter code: DNA-directed RNA polymerase subunit alpha (332 aa).

The alpha N-terminal domain (alpha-NTD) stretch occupies residues methionine 1–glutamate 244. The alpha C-terminal domain (alpha-CTD) stretch occupies residues isoleucine 259–asparagine 332.

Belongs to the RNA polymerase alpha chain family. Homodimer. The RNAP catalytic core consists of 2 alpha, 1 beta, 1 beta' and 1 omega subunit. When a sigma factor is associated with the core the holoenzyme is formed, which can initiate transcription.

The catalysed reaction is RNA(n) + a ribonucleoside 5'-triphosphate = RNA(n+1) + diphosphate. In terms of biological role, DNA-dependent RNA polymerase catalyzes the transcription of DNA into RNA using the four ribonucleoside triphosphates as substrates. In Mesomycoplasma hyopneumoniae (strain 232) (Mycoplasma hyopneumoniae), this protein is DNA-directed RNA polymerase subunit alpha.